A 289-amino-acid chain; its full sequence is Pantothenate synthetase (289 aa).

33-40 (MGNLHDGH) provides a ligand contact to ATP. Residue histidine 40 is the Proton donor of the active site. Residue glutamine 64 participates in (R)-pantoate binding. Residue glutamine 64 coordinates beta-alanine. 155-158 (GKKD) serves as a coordination point for ATP. A (R)-pantoate-binding site is contributed by glutamine 161. ATP-binding positions include alanine 184 and 192–195 (LSSR).

Belongs to the pantothenate synthetase family. Homodimer.

Its subcellular location is the cytoplasm. It catalyses the reaction (R)-pantoate + beta-alanine + ATP = (R)-pantothenate + AMP + diphosphate + H(+). Its pathway is cofactor biosynthesis; (R)-pantothenate biosynthesis; (R)-pantothenate from (R)-pantoate and beta-alanine: step 1/1. Catalyzes the condensation of pantoate with beta-alanine in an ATP-dependent reaction via a pantoyl-adenylate intermediate. This Acidovorax sp. (strain JS42) protein is Pantothenate synthetase.